The following is a 683-amino-acid chain: DNA ligase 2 (683 aa).

Residues 27 to 31, 76 to 77, and Glu-106 contribute to the NAD(+) site; these read DGEFD and SL. The active-site N6-AMP-lysine intermediate is the Lys-108. NAD(+) contacts are provided by Arg-129, Glu-169, Lys-285, and Lys-309. Zn(2+) is bound by residues Cys-403, Cys-406, Cys-422, and Cys-428. Residues 592 to 681 form the BRCT domain; sequence SIERTLEGLS…PAAVAAEEPE (90 aa).

The protein belongs to the NAD-dependent DNA ligase family. LigA subfamily. The cofactor is Mg(2+). Mn(2+) serves as cofactor.

It carries out the reaction NAD(+) + (deoxyribonucleotide)n-3'-hydroxyl + 5'-phospho-(deoxyribonucleotide)m = (deoxyribonucleotide)n+m + AMP + beta-nicotinamide D-nucleotide.. DNA ligase that catalyzes the formation of phosphodiester linkages between 5'-phosphoryl and 3'-hydroxyl groups in double-stranded DNA using NAD as a coenzyme and as the energy source for the reaction. It is essential for DNA replication and repair of damaged DNA. This is DNA ligase 2 from Nocardia farcinica (strain IFM 10152).